Reading from the N-terminus, the 216-residue chain is Thioredoxin-like 2, chloroplastic (216 aa).

The N-terminal 58 residues, 1–58 (MAEALLPLPRRLVVTASTPACSSASSSTSPSPHCLLSRANPRPPRLAAPSPPRHRRLK), are a transit peptide targeting the chloroplast. Residues 19–40 (PACSSASSSTSPSPHCLLSRAN) are compositionally biased toward low complexity. Residues 19 to 70 (PACSSASSSTSPSPHCLLSRANPRPPRLAAPSPPRHRRLKAHAAVSDKSEQP) form a disordered region. Over residues 41 to 51 (PRPPRLAAPSP) the composition is skewed to pro residues. Residues 61 to 188 (AAVSDKSEQP…LKDAIAVHNT (128 aa)) form the Thioredoxin domain. Active-site nucleophile residues include C111 and C114. C111 and C114 form a disulfide bridge.

It belongs to the thioredoxin family.

Its subcellular location is the plastid. The protein localises to the chloroplast. Functionally, probable thiol-disulfide oxidoreductase that may participate in various redox reactions. The protein is Thioredoxin-like 2, chloroplastic of Oryza sativa subsp. japonica (Rice).